Consider the following 373-residue polypeptide: tRNA-specific 2-thiouridylase MnmA (373 aa).

ATP is bound by residues 18 to 25 (AMSGGVDS) and leucine 44. Cysteine 117 functions as the Nucleophile in the catalytic mechanism. A disulfide bridge connects residues cysteine 117 and cysteine 214. Glycine 141 provides a ligand contact to ATP. The interval 163–165 (RDQ) is interaction with tRNA. Residue cysteine 214 is the Cysteine persulfide intermediate of the active site.

This sequence belongs to the MnmA/TRMU family.

It localises to the cytoplasm. The catalysed reaction is S-sulfanyl-L-cysteinyl-[protein] + uridine(34) in tRNA + AH2 + ATP = 2-thiouridine(34) in tRNA + L-cysteinyl-[protein] + A + AMP + diphosphate + H(+). In terms of biological role, catalyzes the 2-thiolation of uridine at the wobble position (U34) of tRNA, leading to the formation of s(2)U34. The polypeptide is tRNA-specific 2-thiouridylase MnmA (Paramagnetospirillum magneticum (strain ATCC 700264 / AMB-1) (Magnetospirillum magneticum)).